The following is a 1550-amino-acid chain: Cellulose synthase 1 (1550 aa).

Residues 1–741 are catalytic; the sequence is MPEVRSSTQS…KERVLKGTVK (741 aa). 3 consecutive transmembrane segments (helical) span residues 26 to 46, 47 to 67, and 106 to 126; these read GAGLIIGVFGLCALIAATSVT, LPPEQQLIVAFVCVVIFFIVG, and GLLGTMLLVAELYALMMLFLS. The segment at 147–240 is catalytic subdomain A; the sequence is EWPTVDIFVP…YILIFDCDHV (94 aa). Asp-189 is a catalytic residue. 2 residues coordinate substrate: Asp-236 and Asp-238. The catalytic subdomain B stretch occupies residues 317–377; that stretch reads TAIEQIGGFA…GQRVRWARGM (61 aa). Residue Asp-333 is part of the active site. 5 helical membrane-spanning segments follow: residues 398–418, 423–443, 468–488, 507–527, and 547–567; these read LCYLSAMTSFLFAVPRVIFLS, FLFFGQNIIAASPLALLAYAI, VYETTMALFLVRVTIVTLLSP, FDLGAVYPNIILGLIMFGGLA, and LLNSAWAMLSLIIILAAIAVG. The region spanning 572-647 is the PilZ domain; the sequence is QKRNSHRIPA…PARIIRAGNG (76 aa). Disordered regions lie at residues 708–731 and 768–813; these read VHRSSPTKPSAGNALSDDTNNPSR and APAH…QPLA. Residues 742-1550 form a cyclic di-GMP binding domain region; sequence MVSLLALLTF…KQLEDERRKS (809 aa). Residues 768–796 are compositionally biased toward low complexity; sequence APAHQPEASDLPPLPALLPATSGAAQAGS. A helical transmembrane segment spans residues 1513–1533; it reads VLLVGLLGCILIVSVLARALA.

The protein in the N-terminal section; belongs to the glycosyltransferase 2 family. This sequence in the C-terminal section; belongs to the AcsB/BcsB family. Mg(2+) is required as a cofactor.

It localises to the cell inner membrane. It catalyses the reaction [(1-&gt;4)-beta-D-glucosyl](n) + UDP-alpha-D-glucose = [(1-&gt;4)-beta-D-glucosyl](n+1) + UDP + H(+). The protein operates within glycan metabolism; bacterial cellulose biosynthesis. Bifunctional protein comprised of a catalytic subunit and a regulatory subunit. The catalytic subunit of cellulose synthase polymerizes uridine 5'-diphosphate glucose to cellulose in a processive way. The thick cellulosic mats generated by this enzyme probably provide a specialized protective environment to the bacterium. The regulatory subunit binds bis-(3'-5') cyclic diguanylic acid (c-di-GMP). This chain is Cellulose synthase 1 (acsAB), found in Novacetimonas hansenii (Komagataeibacter hansenii).